Consider the following 1386-residue polypeptide: DNA-directed RNA polymerase subunit beta (1386 aa).

Belongs to the RNA polymerase beta chain family. In terms of assembly, the RNAP catalytic core consists of 2 alpha, 1 beta, 1 beta' and 1 omega subunit. When a sigma factor is associated with the core the holoenzyme is formed, which can initiate transcription.

It catalyses the reaction RNA(n) + a ribonucleoside 5'-triphosphate = RNA(n+1) + diphosphate. In terms of biological role, DNA-dependent RNA polymerase catalyzes the transcription of DNA into RNA using the four ribonucleoside triphosphates as substrates. This is DNA-directed RNA polymerase subunit beta from Nitratiruptor sp. (strain SB155-2).